A 648-amino-acid chain; its full sequence is 1-deoxy-D-xylulose-5-phosphate synthase (648 aa).

Thiamine diphosphate contacts are provided by residues H73 and 114–116 (SHA). D145 lines the Mg(2+) pocket. Thiamine diphosphate contacts are provided by residues 146–147 (GA), N175, Y286, and E367. N175 contributes to the Mg(2+) binding site.

The protein belongs to the transketolase family. DXPS subfamily. Homodimer. Mg(2+) serves as cofactor. Requires thiamine diphosphate as cofactor.

It carries out the reaction D-glyceraldehyde 3-phosphate + pyruvate + H(+) = 1-deoxy-D-xylulose 5-phosphate + CO2. It participates in metabolic intermediate biosynthesis; 1-deoxy-D-xylulose 5-phosphate biosynthesis; 1-deoxy-D-xylulose 5-phosphate from D-glyceraldehyde 3-phosphate and pyruvate: step 1/1. Functionally, catalyzes the acyloin condensation reaction between C atoms 2 and 3 of pyruvate and glyceraldehyde 3-phosphate to yield 1-deoxy-D-xylulose-5-phosphate (DXP). The polypeptide is 1-deoxy-D-xylulose-5-phosphate synthase (Rhodococcus erythropolis (strain PR4 / NBRC 100887)).